The chain runs to 128 residues: Small ribosomal subunit protein uS14m (128 aa).

This sequence belongs to the universal ribosomal protein uS14 family. Component of the mitochondrial small ribosomal subunit (mt-SSU). Mature mammalian 55S mitochondrial ribosomes consist of a small (28S) and a large (39S) subunit. The 28S small subunit contains a 12S ribosomal RNA (12S mt-rRNA) and 30 different proteins. The 39S large subunit contains a 16S rRNA (16S mt-rRNA), a copy of mitochondrial valine transfer RNA (mt-tRNA(Val)), which plays an integral structural role, and 52 different proteins. Interacts with LIAT1.

The protein resides in the mitochondrion. The sequence is that of Small ribosomal subunit protein uS14m from Homo sapiens (Human).